The sequence spans 709 residues: Frizzled-6 (709 aa).

The signal sequence occupies residues Met1 to Gly18. An FZ domain is found at His19–Thr132. Over His19 to Phe201 the chain is Extracellular. Intrachain disulfides connect Cys24/Cys85, Cys32/Cys78, Cys69/Cys106, Cys95/Cys129, and Cys99/Cys123. N-linked (GlcNAc...) asparagine glycosylation occurs at Asn38. Residues Ile202–Ile222 traverse the membrane as a helical segment. Over Asp223–Pro233 the chain is Cytoplasmic. Residues Ile234–Leu254 traverse the membrane as a helical segment. Over Gly255–Val284 the chain is Extracellular. Asn256 carries N-linked (GlcNAc...) asparagine glycosylation. A helical transmembrane segment spans residues Val285–Ile305. The Cytoplasmic segment spans residues Thr306 to Ala324. Residues Val325–Met345 traverse the membrane as a helical segment. The Extracellular segment spans residues Asn346–Phe370. An N-linked (GlcNAc...) asparagine glycan is attached at Asn352. The helical transmembrane segment at Val371–Ile391 threads the bilayer. The Cytoplasmic portion of the chain corresponds to Ser392–Arg416. The chain crosses the membrane as a helical span at residues Ile417–Tyr437. At Glu438–Leu473 the chain is on the extracellular side. Residues Ala474–Val494 traverse the membrane as a helical segment. Topologically, residues Gly495–Ala709 are cytoplasmic. The Lys-Thr-X-X-X-Trp motif, mediates interaction with the PDZ domain of Dvl family members motif lies at Lys498–Trp503. Residues Gln583–Glu594 show a composition bias toward polar residues. Positions Gln583–Ala709 are disordered. Residues Ser596–Gly616 are compositionally biased toward basic and acidic residues. A compositionally biased stretch (polar residues) spans Gly620 to Arg629. Residues Asn630–Asn644 show a composition bias toward basic and acidic residues. The residue at position 656 (Ser656) is a Phosphoserine. Positions Cys669 to Pro690 are enriched in polar residues. Over residues Ala697–Ala709 the composition is skewed to basic and acidic residues.

It belongs to the G-protein coupled receptor Fz/Smo family. In terms of assembly, interacts with LMBR1L. Post-translationally, ubiquitinated by ZNRF3, leading to its degradation by the proteasome. Expressed in both hair cells and supporting cells in the utricle, saccule, cristae and the organ of Corti in the inner ear (at protein level).

It localises to the membrane. The protein localises to the cell membrane. The protein resides in the cell surface. Its subcellular location is the apical cell membrane. It is found in the cytoplasmic vesicle membrane. It localises to the endoplasmic reticulum membrane. Functionally, receptor for Wnt proteins. Most of frizzled receptors are coupled to the beta-catenin canonical signaling pathway, which leads to the activation of disheveled proteins, inhibition of GSK-3 kinase, nuclear accumulation of beta-catenin and activation of Wnt target genes. A second signaling pathway involving PKC and calcium fluxes has been seen for some family members, but it is not yet clear if it represents a distinct pathway or if it can be integrated in the canonical pathway, as PKC seems to be required for Wnt-mediated inactivation of GSK-3 kinase. Both pathways seem to involve interactions with G-proteins. Activation by Wnt5A stimulates PKC activity via a G-protein-dependent mechanism. Involved in transduction and intercellular transmission of polarity information during tissue morphogenesis and/or in differentiated tissues. Together with FZD3, is involved in the neural tube closure and plays a role in the regulation of the establishment of planar cell polarity (PCP), particularly in the orientation of asymmetric bundles of stereocilia on the apical faces of a subset of auditory and vestibular sensory cells located in the inner ear. The polypeptide is Frizzled-6 (Fzd6) (Mus musculus (Mouse)).